A 117-amino-acid chain; its full sequence is Large ribosomal subunit protein uL18 (117 aa).

Belongs to the universal ribosomal protein uL18 family. Part of the 50S ribosomal subunit; part of the 5S rRNA/L5/L18/L25 subcomplex. Contacts the 5S and 23S rRNAs.

Its function is as follows. This is one of the proteins that bind and probably mediate the attachment of the 5S RNA into the large ribosomal subunit, where it forms part of the central protuberance. This chain is Large ribosomal subunit protein uL18, found in Laribacter hongkongensis (strain HLHK9).